The chain runs to 512 residues: MKKIQFFDTTLRDGEQTPGVNFDVKEKIQIALQLEKLGIDVIEAGFPISSPGDFECVKAIAKAIKHCSVTGLARCVEGDIDRAEEALKDAVSPQIHIFLATSDVHMEYKLKMSRAEVLASIKHHISYARQKFDVVQFSPEDATRSDRAFLIEAVQTAIDAGATVINIPDTVGYTNPTEFGQLFQDLRREIKQFDDIIFASHCHDDLGMATANALAAIENGARRVEGTINGIGERAGNTALEEVAVALHIRKDFYQAETNIVLNQFKNSSDLISRLSGMPVPRNKAVIGGNAYAHESGIHQDGVLKNPDTYEIITPALVGVDKNSLPLGKLSGKHAFNTRMEEMGYTLTEQEQKDAFKRFKQLADAKKEVTEEDLHALILGQSSESADDFELKHLQVQYVTGGVQGAIVRIEERDGALVEDAATGSGSIEAIYNTINRLMKQDIELTDYRIQAITAGQDAQAEVHVVIKNDKGAVFHGIGIDFDVLTASAKAYLQASGKSKTASKQADFEEVK.

One can recognise a Pyruvate carboxyltransferase domain in the interval 4–266 (IQFFDTTLRD…ETNIVLNQFK (263 aa)). Aspartate 13, histidine 201, histidine 203, and asparagine 237 together coordinate Mn(2+). The interval 390–512 (ELKHLQVQYV…SKQADFEEVK (123 aa)) is regulatory domain.

The protein belongs to the alpha-IPM synthase/homocitrate synthase family. LeuA type 1 subfamily. As to quaternary structure, homodimer. The cofactor is Mn(2+).

The protein localises to the cytoplasm. It carries out the reaction 3-methyl-2-oxobutanoate + acetyl-CoA + H2O = (2S)-2-isopropylmalate + CoA + H(+). Its pathway is amino-acid biosynthesis; L-leucine biosynthesis; L-leucine from 3-methyl-2-oxobutanoate: step 1/4. Functionally, catalyzes the condensation of the acetyl group of acetyl-CoA with 3-methyl-2-oxobutanoate (2-ketoisovalerate) to form 3-carboxy-3-hydroxy-4-methylpentanoate (2-isopropylmalate). The protein is 2-isopropylmalate synthase of Listeria monocytogenes serotype 4b (strain CLIP80459).